A 165-amino-acid polypeptide reads, in one-letter code: Lipoprotein signal peptidase (165 aa).

3 helical membrane-spanning segments follow: residues 9–29 (FLAI…VLLY), 69–89 (KYFL…FLFL), and 98–118 (IRFS…DILF). Residues D124 and D142 contribute to the active site. Residues 133-153 (WYFPTFNFADIFISLGTFIFV) form a helical membrane-spanning segment.

It belongs to the peptidase A8 family.

It localises to the cell inner membrane. It catalyses the reaction Release of signal peptides from bacterial membrane prolipoproteins. Hydrolyzes -Xaa-Yaa-Zaa-|-(S,diacylglyceryl)Cys-, in which Xaa is hydrophobic (preferably Leu), and Yaa (Ala or Ser) and Zaa (Gly or Ala) have small, neutral side chains.. Its pathway is protein modification; lipoprotein biosynthesis (signal peptide cleavage). Functionally, this protein specifically catalyzes the removal of signal peptides from prolipoproteins. This Chlamydia caviae (strain ATCC VR-813 / DSM 19441 / 03DC25 / GPIC) (Chlamydophila caviae) protein is Lipoprotein signal peptidase.